We begin with the raw amino-acid sequence, 447 residues long: MFTKYKFLYFLFDSTFFKYWYVIPMAMKIYIEGFDEKGYGVGNNIHVPFAYPGDIVEVKVRRKGKKKIGEIVKIIEESPYRTSNKYCAHLGKCGGCLWGLMDYQYQLEFKKKVIENLFGYDKDIIPSPKTIYYRNRMDYPIYNKVSLKEPGKWYGYIPIKECKMLSKEAEIIINEFNKFIEKYKIPSWDTVKHTGFLRYLVIREGKFTKERMIHIITYKRKKFEELWDFIENIKDLVTSVYWGIREDLGDVSISEKLYHYYGSKFLRERILDIEYYISPNSFFQTNSYQAVNLVKIVKEFLEPSENDVVLDLYSGVGLFSLQIANEVKKVIGIEIVEEAVEMAKLNASINNIDAEFIASPVEKAPIIKANKIIVDPPRAGLTNKAIEYIEKINPDTIVYVSCNPYTQKRDINKLKGYKIIDMQPLDMFPNTPHIENVILMKKSRTTD.

[4Fe-4S] cluster-binding residues include cysteine 87, cysteine 93, cysteine 96, and cysteine 162. Residues glutamine 284, tyrosine 313, glutamate 334, and aspartate 375 each contribute to the S-adenosyl-L-methionine site. The Nucleophile role is filled by cysteine 402.

Belongs to the class I-like SAM-binding methyltransferase superfamily. RNA M5U methyltransferase family.

This is an uncharacterized protein from Nanoarchaeum equitans (strain Kin4-M).